The primary structure comprises 158 residues: SsrA-binding protein (158 aa).

The interval 131-158 (GKKTHDKRETEKKRDWNREKARLLRDRG) is disordered. A compositionally biased stretch (basic and acidic residues) spans 136–158 (DKRETEKKRDWNREKARLLRDRG).

This sequence belongs to the SmpB family.

Its subcellular location is the cytoplasm. Its function is as follows. Required for rescue of stalled ribosomes mediated by trans-translation. Binds to transfer-messenger RNA (tmRNA), required for stable association of tmRNA with ribosomes. tmRNA and SmpB together mimic tRNA shape, replacing the anticodon stem-loop with SmpB. tmRNA is encoded by the ssrA gene; the 2 termini fold to resemble tRNA(Ala) and it encodes a 'tag peptide', a short internal open reading frame. During trans-translation Ala-aminoacylated tmRNA acts like a tRNA, entering the A-site of stalled ribosomes, displacing the stalled mRNA. The ribosome then switches to translate the ORF on the tmRNA; the nascent peptide is terminated with the 'tag peptide' encoded by the tmRNA and targeted for degradation. The ribosome is freed to recommence translation, which seems to be the essential function of trans-translation. The polypeptide is SsrA-binding protein (Brucella abortus biovar 1 (strain 9-941)).